The primary structure comprises 408 residues: Cobalt-precorrin-5B C(1)-methyltransferase (408 aa).

This sequence belongs to the CbiD family.

The catalysed reaction is Co-precorrin-5B + S-adenosyl-L-methionine = Co-precorrin-6A + S-adenosyl-L-homocysteine. It participates in cofactor biosynthesis; adenosylcobalamin biosynthesis; cob(II)yrinate a,c-diamide from sirohydrochlorin (anaerobic route): step 6/10. Functionally, catalyzes the methylation of C-1 in cobalt-precorrin-5B to form cobalt-precorrin-6A. The protein is Cobalt-precorrin-5B C(1)-methyltransferase of Clostridioides difficile (strain 630) (Peptoclostridium difficile).